A 424-amino-acid chain; its full sequence is Enolase (424 aa).

Gln-162 provides a ligand contact to (2R)-2-phosphoglycerate. Glu-204 functions as the Proton donor in the catalytic mechanism. The Mg(2+) site is built by Asp-241, Glu-284, and Asp-311. (2R)-2-phosphoglycerate is bound by residues Lys-336, Arg-365, Ser-366, and Lys-387. Lys-336 (proton acceptor) is an active-site residue.

The protein belongs to the enolase family. The cofactor is Mg(2+).

The protein resides in the cytoplasm. Its subcellular location is the secreted. It is found in the cell surface. It catalyses the reaction (2R)-2-phosphoglycerate = phosphoenolpyruvate + H2O. The protein operates within carbohydrate degradation; glycolysis; pyruvate from D-glyceraldehyde 3-phosphate: step 4/5. Functionally, catalyzes the reversible conversion of 2-phosphoglycerate (2-PG) into phosphoenolpyruvate (PEP). It is essential for the degradation of carbohydrates via glycolysis. This is Enolase from Rhizobium meliloti (strain 1021) (Ensifer meliloti).